A 107-amino-acid polypeptide reads, in one-letter code: Envelope small membrane protein (107 aa).

Residues 1–11 (MMNLVNKSLEE) are Virion surface-facing. The chain crosses the membrane as a helical span at residues 12-32 (NGSFLTAVYIFCAFVALYLLG). The Intravirion segment spans residues 33 to 107 (RALHAFVQAA…NFQNDGKLHS (75 aa)).

Belongs to the gammacoronaviruses E protein family. In terms of assembly, homooligomer. Interacts with the M membrane protein in the budding compartment of the host cell, which is located between endoplasmic reticulum and the Golgi complex. The cytoplasmic tails of both proteins are important for this function. Interacts with Nucleoprotein.

Its subcellular location is the host Golgi apparatus membrane. Plays a central role in virus morphogenesis and assembly. Acts as a viroporin and self-assembles in host membranes forming pentameric protein-lipid pores that allow ion transport. Also plays a role in the induction of apoptosis. The polypeptide is Envelope small membrane protein (Gallus gallus (Chicken)).